Reading from the N-terminus, the 227-residue chain is ATP-dependent dethiobiotin synthetase BioD (227 aa).

Residue D13–Y18 participates in ATP binding. T17 is a binding site for Mg(2+). Residue K38 is part of the active site. S42 contacts substrate. Residues D55, E116 to G119, and N179 to N180 each bind ATP. D55 and E116 together coordinate Mg(2+).

Belongs to the dethiobiotin synthetase family. Homodimer. Requires Mg(2+) as cofactor.

It is found in the cytoplasm. The enzyme catalyses (7R,8S)-7,8-diammoniononanoate + CO2 + ATP = (4R,5S)-dethiobiotin + ADP + phosphate + 3 H(+). Its pathway is cofactor biosynthesis; biotin biosynthesis; biotin from 7,8-diaminononanoate: step 1/2. Functionally, catalyzes a mechanistically unusual reaction, the ATP-dependent insertion of CO2 between the N7 and N8 nitrogen atoms of 7,8-diaminopelargonic acid (DAPA, also called 7,8-diammoniononanoate) to form a ureido ring. The protein is ATP-dependent dethiobiotin synthetase BioD of Clostridium botulinum (strain Kyoto / Type A2).